The sequence spans 282 residues: MNQRIEEVMLANVKRDVARRKRHFATSVVVLSLLAVAWYVCQIEFQKLGAGLPRLWSFVVQMFPPDLSDLDVILKGAGETLAMATIGTIFATIIAFPLALMAARNTCPNKWTYRVSRAILNASRGTETFVYALVFVAAVGFGPFSGVLAITFHMVGAIGKMFAEAIEPVDQGPLDALALTGASRAKIIRYGLIPDVMPHLIASVLYIWEFSVRTSTVLGIVGAGGIGQTLKDTVDLLEFNKMITVLAVVLLMVSAIDFISDRLRYLILDTKREGFETLPANN.

The next 4 helical transmembrane spans lie at 23 to 43, 81 to 101, 130 to 150, and 239 to 259; these read HFAT…VCQI, LAMA…LALM, VYAL…VLAI, and FNKM…IDFI. In terms of domain architecture, ABC transmembrane type-1 spans 77-260; the sequence is AGETLAMATI…LMVSAIDFIS (184 aa).

This sequence belongs to the binding-protein-dependent transport system permease family.

The protein localises to the cell inner membrane. Functionally, probably forms part of a binding-protein-dependent hypophosphite transporter. The polypeptide is Putative phosphite transport system permease protein HtxC (htxC) (Stutzerimonas stutzeri (Pseudomonas stutzeri)).